The chain runs to 106 residues: uncharacterized protein (106 aa).

This is an uncharacterized protein from Methanocaldococcus jannaschii (strain ATCC 43067 / DSM 2661 / JAL-1 / JCM 10045 / NBRC 100440) (Methanococcus jannaschii).